Consider the following 398-residue polypeptide: tRNA-specific 2-thiouridylase MnmA (398 aa).

ATP contacts are provided by residues 33–40 (GMSGGVDS) and Met-59. Positions 119-121 (NPD) are interaction with target base in tRNA. Cys-124 (nucleophile) is an active-site residue. Cys-124 and Cys-226 are oxidised to a cystine. Gly-148 is a binding site for ATP. Residues 176 to 178 (KDQ) form an interaction with tRNA region. Cys-226 (cysteine persulfide intermediate) is an active-site residue. Residues 343-344 (RY) form an interaction with tRNA region.

This sequence belongs to the MnmA/TRMU family.

The protein localises to the cytoplasm. It carries out the reaction S-sulfanyl-L-cysteinyl-[protein] + uridine(34) in tRNA + AH2 + ATP = 2-thiouridine(34) in tRNA + L-cysteinyl-[protein] + A + AMP + diphosphate + H(+). Functionally, catalyzes the 2-thiolation of uridine at the wobble position (U34) of tRNA, leading to the formation of s(2)U34. The sequence is that of tRNA-specific 2-thiouridylase MnmA from Psychrobacter sp. (strain PRwf-1).